Here is a 296-residue protein sequence, read N- to C-terminus: Protoheme IX farnesyltransferase 1 (296 aa).

The next 8 membrane-spanning stretches (helical) occupy residues 14-34, 41-61, 86-106, 108-128, 141-161, 165-185, 230-250, and 274-294; these read IVLLLVITAVTTMYAGDALSA, LWDYAHLMAAGALASAGSSAL, IGENIVLAYGLAISSAAVVYA, FLLNAPTAFFIALGIFSYVII, IVIGGIAGSAASWAGWTAATG, LLGFLIGFLVFVWTPSHFWCL, AFGMGLVYLVIAVASGGLMLV, and YLTIIFAAVALDAAFHYPFPF.

The protein belongs to the UbiA prenyltransferase family. Protoheme IX farnesyltransferase subfamily.

Its subcellular location is the cell membrane. The catalysed reaction is heme b + (2E,6E)-farnesyl diphosphate + H2O = Fe(II)-heme o + diphosphate. Its pathway is porphyrin-containing compound metabolism; heme O biosynthesis; heme O from protoheme: step 1/1. Functionally, converts heme B (protoheme IX) to heme O by substitution of the vinyl group on carbon 2 of heme B porphyrin ring with a hydroxyethyl farnesyl side group. This is Protoheme IX farnesyltransferase 1 from Cenarchaeum symbiosum (strain A).